We begin with the raw amino-acid sequence, 130 residues long: Small ribosomal subunit protein uS9 (130 aa).

Belongs to the universal ribosomal protein uS9 family.

This is Small ribosomal subunit protein uS9 from Polaromonas naphthalenivorans (strain CJ2).